A 212-amino-acid polypeptide reads, in one-letter code: Fucoxanthin-chlorophyll a-c binding protein E, chloroplastic (212 aa).

Residues 1-34 constitute a chloroplast transit peptide; sequence MAIACAAAPGLRGAEPFNGAALATSAKSSSAMKM. 3 consecutive transmembrane segments (helical) span residues 76 to 96, 117 to 137, and 178 to 198; these read IAML…PGML, IPPL…LFVV, and GRAA…SNQP.

This sequence belongs to the fucoxanthin chlorophyll protein family. In terms of assembly, the LHC complex of chromophytic algae is composed of fucoxanthin, chlorophyll A and C bound non-covalently by fucoxanthin chlorophyll proteins (FCPs). The ratio of pigments in this LHC is; fucoxanthin: chlorophyll C: chlorophyll A; (0.6-1): (0.1-0.3): (1).

The protein localises to the plastid. It localises to the chloroplast thylakoid membrane. In terms of biological role, the light-harvesting complex (LHC) functions as a light receptor, it captures and delivers excitation energy to photosystems with which it is closely associated. Energy is transferred from the carotenoid and chlorophyll C (or B) to chlorophyll A and the photosynthetic reaction centers where it is used to synthesize ATP and reducing power. This Macrocystis pyrifera (Giant kelp) protein is Fucoxanthin-chlorophyll a-c binding protein E, chloroplastic (FCPE).